A 205-amino-acid chain; its full sequence is Holliday junction branch migration complex subunit RuvA (205 aa).

The tract at residues 1–64 (MIGRIRGLLI…EDAQLLYGFI (64 aa)) is domain I. The domain II stretch occupies residues 65–143 (SKQERSLFRL…SLMEASVGSE (79 aa)). The flexible linker stretch occupies residues 144 to 156 (REFMLQSNYTAPE). Residues 157–205 (AVNTAEEDAIAALLSLGYKPAQASKAVSSVYTDGMSSETLIKSALKSML) are domain III.

It belongs to the RuvA family. As to quaternary structure, homotetramer. Forms an RuvA(8)-RuvB(12)-Holliday junction (HJ) complex. HJ DNA is sandwiched between 2 RuvA tetramers; dsDNA enters through RuvA and exits via RuvB. An RuvB hexamer assembles on each DNA strand where it exits the tetramer. Each RuvB hexamer is contacted by two RuvA subunits (via domain III) on 2 adjacent RuvB subunits; this complex drives branch migration. In the full resolvosome a probable DNA-RuvA(4)-RuvB(12)-RuvC(2) complex forms which resolves the HJ.

The protein localises to the cytoplasm. Functionally, the RuvA-RuvB-RuvC complex processes Holliday junction (HJ) DNA during genetic recombination and DNA repair, while the RuvA-RuvB complex plays an important role in the rescue of blocked DNA replication forks via replication fork reversal (RFR). RuvA specifically binds to HJ cruciform DNA, conferring on it an open structure. The RuvB hexamer acts as an ATP-dependent pump, pulling dsDNA into and through the RuvAB complex. HJ branch migration allows RuvC to scan DNA until it finds its consensus sequence, where it cleaves and resolves the cruciform DNA. The polypeptide is Holliday junction branch migration complex subunit RuvA (Shewanella halifaxensis (strain HAW-EB4)).